A 142-amino-acid chain; its full sequence is uncharacterized protein (142 aa).

This is an uncharacterized protein from Saccharomyces cerevisiae (strain ATCC 204508 / S288c) (Baker's yeast).